The chain runs to 625 residues: Folylpolyglutamate synthase (625 aa).

141-144 (GKGS) contributes to the ATP binding site. Mg(2+) contacts are provided by S165, E234, and H262. 2 residues coordinate ATP: R384 and D414.

Belongs to the folylpolyglutamate synthase family. Requires a monovalent cation as cofactor.

Its subcellular location is the mitochondrion inner membrane. The protein localises to the mitochondrion matrix. The catalysed reaction is (6S)-5,6,7,8-tetrahydrofolyl-(gamma-L-Glu)(n) + L-glutamate + ATP = (6S)-5,6,7,8-tetrahydrofolyl-(gamma-L-Glu)(n+1) + ADP + phosphate + H(+). It functions in the pathway cofactor biosynthesis; tetrahydrofolylpolyglutamate biosynthesis. In terms of biological role, catalyzes conversion of folates to polyglutamate derivatives allowing concentration of folate compounds in the cell and the intracellular retention of these cofactors, which are important substrates for most of the folate-dependent enzymes that are involved in one-carbon transfer reactions involved in purine, pyrimidine and amino acid synthesis. Essential for organellar and whole-plant folate homeostasis. The chain is Folylpolyglutamate synthase from Arabidopsis thaliana (Mouse-ear cress).